The sequence spans 355 residues: UDP-3-O-acylglucosamine N-acyltransferase (355 aa).

Residue His-252 is the Proton acceptor of the active site.

The protein belongs to the transferase hexapeptide repeat family. LpxD subfamily. Homotrimer.

The catalysed reaction is a UDP-3-O-[(3R)-3-hydroxyacyl]-alpha-D-glucosamine + a (3R)-hydroxyacyl-[ACP] = a UDP-2-N,3-O-bis[(3R)-3-hydroxyacyl]-alpha-D-glucosamine + holo-[ACP] + H(+). It participates in bacterial outer membrane biogenesis; LPS lipid A biosynthesis. Its function is as follows. Catalyzes the N-acylation of UDP-3-O-acylglucosamine using 3-hydroxyacyl-ACP as the acyl donor. Is involved in the biosynthesis of lipid A, a phosphorylated glycolipid that anchors the lipopolysaccharide to the outer membrane of the cell. This Polynucleobacter asymbioticus (strain DSM 18221 / CIP 109841 / QLW-P1DMWA-1) (Polynucleobacter necessarius subsp. asymbioticus) protein is UDP-3-O-acylglucosamine N-acyltransferase.